Here is a 191-residue protein sequence, read N- to C-terminus: MALRDSFNKIISYFDTDEVSEVEEPAVASVKRQQDAAQPASQQQKAQSHQYHQSASRPSQQQVQSGQNRRSGEENIHSLPTRRQSHNQQPAQEKTTIALKLPRKYEDAEEIVDLLIRNECVLIDFQYMLEAQARRCLDFIDGASKVLAGNLQKVGASMYLLTPINVIVDAEEMTLAANGQDVSFNYDMKRR.

The segment at 21 to 96 is disordered; sequence EVEEPAVASV…NQQPAQEKTT (76 aa). Residues 25–56 show a composition bias toward low complexity; the sequence is PAVASVKRQQDAAQPASQQQKAQSHQYHQSAS. Polar residues-rich tracts occupy residues 57–69 and 86–95; these read RPSQQQVQSGQNR and HNQQPAQEKT.

This sequence belongs to the SepF family. Homodimer. Interacts with FtsZ.

It is found in the cytoplasm. Its function is as follows. Cell division protein that is part of the divisome complex and is recruited early to the Z-ring. Probably stimulates Z-ring formation, perhaps through the cross-linking of FtsZ protofilaments. Its function overlaps with FtsA. This chain is Cell division protein SepF, found in Streptococcus mutans serotype c (strain ATCC 700610 / UA159).